The sequence spans 665 residues: Adenylate cyclase 1 (665 aa).

The segment at Met1–Arg25 is disordered. The span at Ser7–Ser24 shows a compositional bias: basic and acidic residues. Helical transmembrane passes span Ser33–Leu53 and Ala373–Ile393. The 51-residue stretch at Thr394 to Leu444 folds into the HAMP domain. Positions Thr471–Glu603 constitute a Guanylate cyclase domain. Mg(2+) is bound by residues Asp476 and Asp520.

Belongs to the adenylyl cyclase class-3 family. It depends on Mg(2+) as a cofactor.

It is found in the cell membrane. It carries out the reaction ATP = 3',5'-cyclic AMP + diphosphate. In terms of biological role, plays essential roles in regulation of cellular metabolism by catalyzing the synthesis of a second messenger, cAMP. This is Adenylate cyclase 1 (cya1) from Rhizobium meliloti (strain 1021) (Ensifer meliloti).